We begin with the raw amino-acid sequence, 346 residues long: Phosphate acyltransferase (346 aa).

This sequence belongs to the PlsX family. Homodimer. Probably interacts with PlsY.

The protein resides in the cytoplasm. The catalysed reaction is a fatty acyl-[ACP] + phosphate = an acyl phosphate + holo-[ACP]. The protein operates within lipid metabolism; phospholipid metabolism. Functionally, catalyzes the reversible formation of acyl-phosphate (acyl-PO(4)) from acyl-[acyl-carrier-protein] (acyl-ACP). This enzyme utilizes acyl-ACP as fatty acyl donor, but not acyl-CoA. In Synechococcus elongatus (strain ATCC 33912 / PCC 7942 / FACHB-805) (Anacystis nidulans R2), this protein is Phosphate acyltransferase.